Here is a 193-residue protein sequence, read N- to C-terminus: Probable nicotinate-nucleotide adenylyltransferase (193 aa).

The protein belongs to the NadD family.

The catalysed reaction is nicotinate beta-D-ribonucleotide + ATP + H(+) = deamido-NAD(+) + diphosphate. Its pathway is cofactor biosynthesis; NAD(+) biosynthesis; deamido-NAD(+) from nicotinate D-ribonucleotide: step 1/1. Catalyzes the reversible adenylation of nicotinate mononucleotide (NaMN) to nicotinic acid adenine dinucleotide (NaAD). The sequence is that of Probable nicotinate-nucleotide adenylyltransferase from Borreliella afzelii (strain PKo) (Borrelia afzelii).